Reading from the N-terminus, the 176-residue chain is ATP-dependent protease subunit HslV (176 aa).

The active site involves threonine 2. 3 residues coordinate Na(+): glycine 157, cysteine 160, and threonine 163.

The protein belongs to the peptidase T1B family. HslV subfamily. A double ring-shaped homohexamer of HslV is capped on each side by a ring-shaped HslU homohexamer. The assembly of the HslU/HslV complex is dependent on binding of ATP.

The protein resides in the cytoplasm. It catalyses the reaction ATP-dependent cleavage of peptide bonds with broad specificity.. Its activity is regulated as follows. Allosterically activated by HslU binding. Its function is as follows. Protease subunit of a proteasome-like degradation complex believed to be a general protein degrading machinery. The polypeptide is ATP-dependent protease subunit HslV (Pseudomonas putida (strain ATCC 47054 / DSM 6125 / CFBP 8728 / NCIMB 11950 / KT2440)).